Here is a 416-residue protein sequence, read N- to C-terminus: Cyclic dinucleotide synthase CdnG (416 aa).

Ser72 contacts GTP. Catalysis depends on residues Asp89, Asp91, and Asp140. Residue Asp91 coordinates GTP. Residue Asp91 participates in Mg(2+) binding. Positions 145–167 (RRRAPKEKEGEIPHAKKGTRSDP) are disordered. Residues 150-167 (KEKEGEIPHAKKGTRSDP) show a composition bias toward basic and acidic residues. Residues Lys236, Ser253, Glu305, Arg306, and Asp309 each coordinate GTP.

The protein belongs to the CD-NTase family. G10 subfamily. The cofactor is Mg(2+).

The enzyme catalyses UTP + GTP = 3',3'-cGMP-UMP + 2 diphosphate. It carries out the reaction GTP + ATP = 3',3'-cGAMP + 2 diphosphate. The catalysed reaction is 2 ATP = 3',3'-c-di-AMP + 2 diphosphate. In terms of biological role, cyclic nucleotide synthase (second messenger synthase) of a CBASS antivirus system. CBASS (cyclic oligonucleotide-based antiphage signaling system) provides immunity against bacteriophage. The CD-NTase protein synthesizes cyclic nucleotides in response to infection; these serve as specific second messenger signals. The signals activate a diverse range of effectors, leading to bacterial cell death and thus abortive phage infection. A type II-short CBASS system. Cyclic dinucleotide synthase that catalyzes the synthesis of predominantly 3'3'-cGMP-UMP, followed by 3'3'-cGAMP and c-di-AMP in a reaction mixture of ATP, CTP, GTP and UTP. The cyclic nucleotide products are second messengers that activate the CBASS Cap5 effector nuclease, leading to DNA degradation and probably cell death. Cyclic nucleotides do not activate the effector equally; reactions with ATP/GTP, ATP/UTP and ATP alone activate Cap5, whereas reaction with GTP/UTP (the major in vitro product) do not. This Bradyrhizobium diazoefficiens (strain JCM 10833 / BCRC 13528 / IAM 13628 / NBRC 14792 / USDA 110) protein is Cyclic dinucleotide synthase CdnG.